We begin with the raw amino-acid sequence, 200 residues long: Putative pseudouridine methyltransferase (200 aa).

The S-adenosyl-L-methionine site is built by Met-133 and Cys-187.

The protein belongs to the methyltransferase superfamily. TrmY family.

It localises to the cytoplasm. The sequence is that of Putative pseudouridine methyltransferase from Alcanivorax borkumensis (strain ATCC 700651 / DSM 11573 / NCIMB 13689 / SK2).